Consider the following 386-residue polypeptide: Na(+)/H(+) antiporter NhaA (386 aa).

The next 10 membrane-spanning stretches (helical) occupy residues 10 to 30, 45 to 65, 84 to 104, 116 to 136, 142 to 162, 169 to 189, 261 to 281, 287 to 307, 323 to 343, and 358 to 378; these read EFSI…NVAP, LSFH…IAAV, LNPL…YLAL, GWGI…RLIF, VIAF…VIIA, VLPV…IAFI, IIVD…GFSA, WLVF…FALL, HLLV…FVAG, and GAIL…LLGI.

This sequence belongs to the NhaA Na(+)/H(+) (TC 2.A.33) antiporter family.

It localises to the cell inner membrane. It carries out the reaction Na(+)(in) + 2 H(+)(out) = Na(+)(out) + 2 H(+)(in). Na(+)/H(+) antiporter that extrudes sodium in exchange for external protons. The polypeptide is Na(+)/H(+) antiporter NhaA (Geotalea uraniireducens (strain Rf4) (Geobacter uraniireducens)).